The following is a 286-amino-acid chain: L-ribulose 3-epimerase (286 aa).

4 residues coordinate D-allulose: His-12, Ser-69, Glu-152, and Glu-158. D-fructose is bound by residues His-12, Ser-69, Glu-152, and Glu-158. Glu-152 acts as the Proton donor/acceptor in catalysis. Residue Glu-152 coordinates Mn(2+). Asp-185 provides a ligand contact to Mn(2+). D-allulose contacts are provided by His-188, His-211, Arg-217, and Glu-246. 4 residues coordinate D-fructose: His-188, His-211, Arg-217, and Glu-246. His-211 is a binding site for Mn(2+). The Proton donor/acceptor role is filled by Glu-246. Residue Glu-246 coordinates Mn(2+).

This sequence belongs to the hyi family. As to quaternary structure, homodimer. It depends on Mn(2+) as a cofactor.

The enzyme catalyses L-ribulose = L-xylulose. The catalysed reaction is D-ribulose = D-xylulose. It carries out the reaction D-allulose = keto-D-fructose. It catalyses the reaction keto-L-tagatose = keto-L-sorbose. The enzyme catalyses keto-D-tagatose = keto-D-sorbose. Its function is as follows. Catalyzes the epimerization of various ketoses at the C(3) position. Exhibits the highest enzymatic activity toward L-ribulose, followed by D-ribulose, D-allulose and D-fructose. Shows lower activity with L-xylulose, L-tagatose, D-xylulose, D-tagatose, L-sorbose, D-sorbose, and weak activity with L-allulose and L-fructose. The polypeptide is L-ribulose 3-epimerase (Methylomonas sp. (strain DH-1)).